The chain runs to 88 residues: Cytochrome c oxidase subunit 6B2 (88 aa).

The disordered stretch occupies residues 1 to 22 (MLDVEAQEPPKGKWSTPPFDPR). The 47-residue stretch at 29–75 (IRNCYQNFLDYHRCLKTRTRRGKSTQPCEYYFRVYHSLCPISWVESW) folds into the CHCH domain. Residues 32-42 (CYQNFLDYHRC) carry the Cx9C motif motif. 2 disulfide bridges follow: Cys-32–Cys-67 and Cys-42–Cys-56. A Cx10C motif motif is present at residues 56 to 67 (CEYYFRVYHSLC).

It belongs to the cytochrome c oxidase subunit 6B family. As to quaternary structure, component of the cytochrome c oxidase (complex IV, CIV), a multisubunit enzyme composed of 14 subunits. The complex is composed of a catalytic core of 3 subunits MT-CO1, MT-CO2 and MT-CO3, encoded in the mitochondrial DNA, and 11 supernumerary subunits COX4I1 (or COX4I2), COX5A, COX5B, COX6A1 (or COX6A2), COX6B1 (or COX6B2), COX6C, COX7A2 (or COX7A1), COX7B, COX7C, COX8A and NDUFA4, which are encoded in the nuclear genome. The complex exists as a monomer or a dimer and forms supercomplexes (SCs) in the inner mitochondrial membrane with NADH-ubiquinone oxidoreductase (complex I, CI) and ubiquinol-cytochrome c oxidoreductase (cytochrome b-c1 complex, complex III, CIII), resulting in different assemblies (supercomplex SCI(1)III(2)IV(1) and megacomplex MCI(2)III(2)IV(2)). In terms of tissue distribution, testis specific. Weak expression in thymus and heart. Expressed in cancer cell lines.

It localises to the mitochondrion inner membrane. Its pathway is energy metabolism; oxidative phosphorylation. Component of the cytochrome c oxidase, the last enzyme in the mitochondrial electron transport chain which drives oxidative phosphorylation. The respiratory chain contains 3 multisubunit complexes succinate dehydrogenase (complex II, CII), ubiquinol-cytochrome c oxidoreductase (cytochrome b-c1 complex, complex III, CIII) and cytochrome c oxidase (complex IV, CIV), that cooperate to transfer electrons derived from NADH and succinate to molecular oxygen, creating an electrochemical gradient over the inner membrane that drives transmembrane transport and the ATP synthase. Cytochrome c oxidase is the component of the respiratory chain that catalyzes the reduction of oxygen to water. Electrons originating from reduced cytochrome c in the intermembrane space (IMS) are transferred via the dinuclear copper A center (CU(A)) of subunit 2 and heme A of subunit 1 to the active site in subunit 1, a binuclear center (BNC) formed by heme A3 and copper B (CU(B)). The BNC reduces molecular oxygen to 2 water molecules using 4 electrons from cytochrome c in the IMS and 4 protons from the mitochondrial matrix. This is Cytochrome c oxidase subunit 6B2 (COX6B2) from Homo sapiens (Human).